Consider the following 416-residue polypeptide: Protein-glutamine gamma-glutamyltransferase (416 aa).

Positions 1–29 form a signal peptide, tat-type signal; that stretch reads MHKRRRLLAFATVGAVICTAGFTPSVSQA. Positions 30–85 are excised as a propeptide; that stretch reads ASSGDGEEKGSYAETHGLTADDVESINALNERALTLGQPGKPPKELPPSASAPSRA. Residues 64 to 103 form a disordered region; it reads TLGQPGKPPKELPPSASAPSRAPSDDRETPPAEPLDRMPE. Residues 76–85 show a composition bias toward low complexity; sequence PPSASAPSRA. The segment covering 86–103 has biased composition (basic and acidic residues); it reads PSDDRETPPAEPLDRMPE. Residue Cys-149 is part of the active site. The disordered stretch occupies residues 290–331; sequence GQDQRGSSDKRKYGDPEAFRPDQGTGLVDMSKDRSIPRSPAK. Basic and acidic residues predominate over residues 295–309; sequence GSSDKRKYGDPEAFR. Residues Asp-340 and His-359 contribute to the active site.

Belongs to the bacterial TGase family. Post-translationally, predicted to be exported by the Tat system. The position of the signal peptide cleavage has not been experimentally proven.

The catalysed reaction is L-glutaminyl-[protein] + L-lysyl-[protein] = [protein]-L-lysyl-N(6)-5-L-glutamyl-[protein] + NH4(+). Functionally, catalyzes the cross-linking of proteins and the conjugation of polyamines to proteins. The chain is Protein-glutamine gamma-glutamyltransferase from Streptomyces cinnamoneus (Streptoverticillium cinnamoneum).